Here is a 330-residue protein sequence, read N- to C-terminus: Ketol-acid reductoisomerase (NADP(+)) (330 aa).

The 181-residue stretch at 1–181 (MKVFYDSDFK…GLSRAGVIQT (181 aa)) folds into the KARI N-terminal Rossmann domain. Residues 24–27 (YGSQ), R47, S52, and 82–85 (DELQ) each bind NADP(+). The active site involves H107. G133 contacts NADP(+). Residues 182–327 (TFKEETETDL…AKLRKMCGLE (146 aa)) form the KARI C-terminal knotted domain. Residues D190, E194, E226, and E230 each coordinate Mg(2+). Residue S251 coordinates substrate.

Belongs to the ketol-acid reductoisomerase family. Requires Mg(2+) as cofactor.

It carries out the reaction (2R)-2,3-dihydroxy-3-methylbutanoate + NADP(+) = (2S)-2-acetolactate + NADPH + H(+). The catalysed reaction is (2R,3R)-2,3-dihydroxy-3-methylpentanoate + NADP(+) = (S)-2-ethyl-2-hydroxy-3-oxobutanoate + NADPH + H(+). Its pathway is amino-acid biosynthesis; L-isoleucine biosynthesis; L-isoleucine from 2-oxobutanoate: step 2/4. The protein operates within amino-acid biosynthesis; L-valine biosynthesis; L-valine from pyruvate: step 2/4. In terms of biological role, involved in the biosynthesis of branched-chain amino acids (BCAA). Catalyzes an alkyl-migration followed by a ketol-acid reduction of (S)-2-acetolactate (S2AL) to yield (R)-2,3-dihydroxy-isovalerate. In the isomerase reaction, S2AL is rearranged via a Mg-dependent methyl migration to produce 3-hydroxy-3-methyl-2-ketobutyrate (HMKB). In the reductase reaction, this 2-ketoacid undergoes a metal-dependent reduction by NADPH to yield (R)-2,3-dihydroxy-isovalerate. The chain is Ketol-acid reductoisomerase (NADP(+)) from Methanococcus maripaludis (strain DSM 14266 / JCM 13030 / NBRC 101832 / S2 / LL).